The sequence spans 330 residues: Beta-hexosaminidase (330 aa).

Substrate contacts are provided by residues Asp62, Arg70, Arg130, and 160-161; that span reads KH. The Proton donor/acceptor role is filled by His173. Asp242 acts as the Nucleophile in catalysis.

This sequence belongs to the glycosyl hydrolase 3 family. NagZ subfamily.

Its subcellular location is the cytoplasm. The catalysed reaction is Hydrolysis of terminal non-reducing N-acetyl-D-hexosamine residues in N-acetyl-beta-D-hexosaminides.. It participates in cell wall biogenesis; peptidoglycan recycling. Functionally, plays a role in peptidoglycan recycling by cleaving the terminal beta-1,4-linked N-acetylglucosamine (GlcNAc) from peptide-linked peptidoglycan fragments, giving rise to free GlcNAc, anhydro-N-acetylmuramic acid and anhydro-N-acetylmuramic acid-linked peptides. This is Beta-hexosaminidase from Vibrio cholerae serotype O1 (strain ATCC 39541 / Classical Ogawa 395 / O395).